A 925-amino-acid chain; its full sequence is Serine/threonine-protein kinase SIK2 (925 aa).

Residues 20–271 (YDIEGTLGKG…IAQIKEHKWM (252 aa)) enclose the Protein kinase domain. Threonine 25 carries the post-translational modification Phosphothreonine. Residues 26–34 (LGKGNFAVV) and lysine 49 contribute to the ATP site. An N6-acetyllysine; by EP300 modification is found at lysine 53. Catalysis depends on aspartate 142, which acts as the Proton acceptor. Residue threonine 175 is modified to Phosphothreonine. Residues 295-335 (EFNEQVLRLMHSLGIDQQKTIESLQNKSYNHFAAIYFLLVE) enclose the UBA domain. At serine 534 the chain carries Phosphoserine. The tract at residues 564-586 (ALSSQKREVHNRSPVSFREGRRA) is disordered. Residue serine 587 is modified to Phosphoserine. Disordered regions lie at residues 630-674 (PNLA…PRQS), 742-776 (SSYP…PLSP), and 800-895 (QPLP…SSYD). Composition is skewed to low complexity over residues 648-659 (QEEVSQQQESVS) and 742-756 (SSYP…LPRQ). Residues 765 to 774 (APPFSLTQPL) show a composition bias toward polar residues. Residues 808-820 (PRAAPLPTQLQQQ) are compositionally biased toward low complexity. Over residues 821–833 (QPPPPPPPPPPRQ) the composition is skewed to pro residues.

It belongs to the protein kinase superfamily. CAMK Ser/Thr protein kinase family. SNF1 subfamily. Interacts with and phosphorylates TORC2/CRTC2. It depends on Mg(2+) as a cofactor. Post-translationally, phosphorylated at Thr-175 by STK11/LKB1 in complex with STE20-related adapter-alpha (STRADA) pseudo kinase and CAB39. Phosphorylated at Thr-484 in response to insulin in adipocytes. Acetylation at Lys-53 inhibits kinase activity. Deacetylated by HDAC6.

The protein localises to the cytoplasm. Its subcellular location is the endoplasmic reticulum membrane. The catalysed reaction is L-seryl-[protein] + ATP = O-phospho-L-seryl-[protein] + ADP + H(+). It carries out the reaction L-threonyl-[protein] + ATP = O-phospho-L-threonyl-[protein] + ADP + H(+). Its activity is regulated as follows. Activated by phosphorylation on Thr-175. Its function is as follows. Serine/threonine-protein kinase that plays a role in many biological processes such as fatty acid oxidation, autophagy, immune response or glucose metabolism. Phosphorylates 'Ser-794' of IRS1 in insulin-stimulated adipocytes, potentially modulating the efficiency of insulin signal transduction. Inhibits CREB activity by phosphorylating and repressing TORCs, the CREB-specific coactivators. Phosphorylates EP300 and thus inhibits its histone acetyltransferase activity. In turn, regulates the DNA-binding ability of several transcription factors such as PPARA or MLXIPL. Also plays a role in thymic T-cell development. The protein is Serine/threonine-protein kinase SIK2 (SIK2) of Pongo abelii (Sumatran orangutan).